A 283-amino-acid chain; its full sequence is NAD(P)H-hydrate epimerase (283 aa).

Residues 1–28 (MLGVRALFGIGLLVTSRGGFVLTHTRAC) constitute a mitochondrion transit peptide. A YjeF N-terminal domain is found at 61 to 270 (AQQIDEELFS…VLEQKYQLNL (210 aa)). A (6S)-NADPHX-binding site is contributed by 115-119 (NNGGD). K(+) contacts are provided by Asn116 and Asp180. Residues 184-190 (GFSFKGA) and Asp213 each bind (6S)-NADPHX. Ser216 contributes to the K(+) binding site.

Belongs to the NnrE/AIBP family. Homodimer. Interacts with apoa1a. Binds to high-density lipoprotein. It depends on K(+) as a cofactor.

It is found in the mitochondrion. Its subcellular location is the secreted. It carries out the reaction (6R)-NADHX = (6S)-NADHX. It catalyses the reaction (6R)-NADPHX = (6S)-NADPHX. Functionally, catalyzes the epimerization of the S- and R-forms of NAD(P)HX, a damaged form of NAD(P)H that is a result of enzymatic or heat-dependent hydration. This is a prerequisite for the S-specific NAD(P)H-hydrate dehydratase to allow the repair of both epimers of NAD(P)HX. The protein is NAD(P)H-hydrate epimerase of Danio rerio (Zebrafish).